Here is a 137-residue protein sequence, read N- to C-terminus: MQRTLSIIKPDAVKKNVVGKIIDRFESNGLRIAAAKKVKLSKCDAKAFYAVHSERPFFNDLVEFMTSGPVVVMVLEGENAVAKNRELMGATNPKEAAAGTIRADFAESIDANAVHGSDSLENAINEINFFFAAREIC.

The ATP site is built by lysine 9, phenylalanine 57, arginine 85, threonine 91, arginine 102, and asparagine 112. Histidine 115 serves as the catalytic Pros-phosphohistidine intermediate.

It belongs to the NDK family. In terms of assembly, homotetramer. It depends on Mg(2+) as a cofactor.

The protein resides in the cytoplasm. The enzyme catalyses a 2'-deoxyribonucleoside 5'-diphosphate + ATP = a 2'-deoxyribonucleoside 5'-triphosphate + ADP. It carries out the reaction a ribonucleoside 5'-diphosphate + ATP = a ribonucleoside 5'-triphosphate + ADP. Functionally, major role in the synthesis of nucleoside triphosphates other than ATP. The ATP gamma phosphate is transferred to the NDP beta phosphate via a ping-pong mechanism, using a phosphorylated active-site intermediate. This Campylobacter curvus (strain 525.92) protein is Nucleoside diphosphate kinase.